The primary structure comprises 284 residues: uncharacterized protein (284 aa).

Belongs to the methyltransferase superfamily.

It localises to the cytoplasm. The protein localises to the nucleus. Its function is as follows. Probable methyltransferase. This is an uncharacterized protein from Schizosaccharomyces pombe (strain 972 / ATCC 24843) (Fission yeast).